The chain runs to 121 residues: Small ribosomal subunit protein uS13 (121 aa).

The tract at residues arginine 93–lysine 121 is disordered.

The protein belongs to the universal ribosomal protein uS13 family. Part of the 30S ribosomal subunit. Forms a loose heterodimer with protein S19. Forms two bridges to the 50S subunit in the 70S ribosome.

Located at the top of the head of the 30S subunit, it contacts several helices of the 16S rRNA. In the 70S ribosome it contacts the 23S rRNA (bridge B1a) and protein L5 of the 50S subunit (bridge B1b), connecting the 2 subunits; these bridges are implicated in subunit movement. Contacts the tRNAs in the A and P-sites. This is Small ribosomal subunit protein uS13 from Variovorax paradoxus (strain S110).